A 413-amino-acid chain; its full sequence is Argininosuccinate synthase (413 aa).

Residues 12–20 and A39 contribute to the ATP site; that span reads AYSGGLDTS. Residues Y92 and S97 each contribute to the L-citrulline site. G122 serves as a coordination point for ATP. Residues T124, N128, and D129 each coordinate L-aspartate. An L-citrulline-binding site is contributed by N128. 5 residues coordinate L-citrulline: R132, S189, S198, E274, and Y286.

The protein belongs to the argininosuccinate synthase family. Type 1 subfamily. In terms of assembly, homotetramer.

The protein resides in the cytoplasm. It catalyses the reaction L-citrulline + L-aspartate + ATP = 2-(N(omega)-L-arginino)succinate + AMP + diphosphate + H(+). It participates in amino-acid biosynthesis; L-arginine biosynthesis; L-arginine from L-ornithine and carbamoyl phosphate: step 2/3. The sequence is that of Argininosuccinate synthase from Aliarcobacter butzleri (strain RM4018) (Arcobacter butzleri).